We begin with the raw amino-acid sequence, 287 residues long: Protease HtpX (287 aa).

The next 2 helical transmembrane spans lie at 4-24 (ILLFLATNLAVVLVLSVVLNI) and 36-56 (LSGLLVMAAVFGFGGAFISLL). Residue His143 participates in Zn(2+) binding. The active site involves Glu144. His147 lines the Zn(2+) pocket. 2 helical membrane-spanning segments follow: residues 158 to 178 (LMQGVVNTFVIFLSRFIANIV) and 192 to 212 (MVYFGVSMVLELVFGFLASFI). Glu221 is a binding site for Zn(2+).

It belongs to the peptidase M48B family. It depends on Zn(2+) as a cofactor.

It localises to the cell inner membrane. This Vibrio cholerae serotype O1 (strain ATCC 39315 / El Tor Inaba N16961) protein is Protease HtpX.